The chain runs to 616 residues: Dihydroxy-acid dehydratase (616 aa).

Position 81 (Asp-81) interacts with Mg(2+). [2Fe-2S] cluster is bound at residue Cys-122. Residues Asp-123 and Lys-124 each coordinate Mg(2+). The residue at position 124 (Lys-124) is an N6-carboxylysine. Cys-195 provides a ligand contact to [2Fe-2S] cluster. Mg(2+) is bound at residue Glu-491. The Proton acceptor role is filled by Ser-517.

This sequence belongs to the IlvD/Edd family. As to quaternary structure, homodimer. It depends on [2Fe-2S] cluster as a cofactor. Mg(2+) serves as cofactor.

It catalyses the reaction (2R)-2,3-dihydroxy-3-methylbutanoate = 3-methyl-2-oxobutanoate + H2O. The catalysed reaction is (2R,3R)-2,3-dihydroxy-3-methylpentanoate = (S)-3-methyl-2-oxopentanoate + H2O. The protein operates within amino-acid biosynthesis; L-isoleucine biosynthesis; L-isoleucine from 2-oxobutanoate: step 3/4. It participates in amino-acid biosynthesis; L-valine biosynthesis; L-valine from pyruvate: step 3/4. Its function is as follows. Functions in the biosynthesis of branched-chain amino acids. Catalyzes the dehydration of (2R,3R)-2,3-dihydroxy-3-methylpentanoate (2,3-dihydroxy-3-methylvalerate) into 2-oxo-3-methylpentanoate (2-oxo-3-methylvalerate) and of (2R)-2,3-dihydroxy-3-methylbutanoate (2,3-dihydroxyisovalerate) into 2-oxo-3-methylbutanoate (2-oxoisovalerate), the penultimate precursor to L-isoleucine and L-valine, respectively. The polypeptide is Dihydroxy-acid dehydratase (Escherichia coli O9:H4 (strain HS)).